The sequence spans 121 residues: Small ribosomal subunit protein uS13 (121 aa).

Residues 91–121 (HKRGLPVRGQRTRTNARTRKGPRRAAASLKK) form a disordered region.

Belongs to the universal ribosomal protein uS13 family. As to quaternary structure, part of the 30S ribosomal subunit. Forms a loose heterodimer with protein S19. Forms two bridges to the 50S subunit in the 70S ribosome.

Functionally, located at the top of the head of the 30S subunit, it contacts several helices of the 16S rRNA. In the 70S ribosome it contacts the 23S rRNA (bridge B1a) and protein L5 of the 50S subunit (bridge B1b), connecting the 2 subunits; these bridges are implicated in subunit movement. Contacts the tRNAs in the A and P-sites. The protein is Small ribosomal subunit protein uS13 of Bordetella petrii (strain ATCC BAA-461 / DSM 12804 / CCUG 43448).